Reading from the N-terminus, the 248-residue chain is ATP synthase subunit a (248 aa).

A run of 6 helical transmembrane segments spans residues phenylalanine 27–valine 47, phenylalanine 83–valine 103, leucine 113–serine 133, leucine 142–isoleucine 162, phenylalanine 192–glycine 212, and isoleucine 215–leucine 235.

This sequence belongs to the ATPase A chain family. As to quaternary structure, F-type ATPases have 2 components, CF(1) - the catalytic core - and CF(0) - the membrane proton channel. CF(1) has five subunits: alpha(3), beta(3), gamma(1), delta(1), epsilon(1). CF(0) has four main subunits: a, b, b' and c.

It is found in the cell inner membrane. Functionally, key component of the proton channel; it plays a direct role in the translocation of protons across the membrane. The chain is ATP synthase subunit a from Rhodopseudomonas palustris (strain ATCC BAA-98 / CGA009).